The sequence spans 391 residues: Tryptophan synthase beta chain (391 aa).

Lys86 carries the N6-(pyridoxal phosphate)lysine modification.

The protein belongs to the TrpB family. As to quaternary structure, tetramer of two alpha and two beta chains. The cofactor is pyridoxal 5'-phosphate.

It catalyses the reaction (1S,2R)-1-C-(indol-3-yl)glycerol 3-phosphate + L-serine = D-glyceraldehyde 3-phosphate + L-tryptophan + H2O. It participates in amino-acid biosynthesis; L-tryptophan biosynthesis; L-tryptophan from chorismate: step 5/5. The beta subunit is responsible for the synthesis of L-tryptophan from indole and L-serine. This chain is Tryptophan synthase beta chain, found in Vibrio metschnikovii.